Consider the following 127-residue polypeptide: MAYRKLGRDSAHRKAMLREMTTQLIMNERIVTTETRAKEIRKTTEKMITLGKRGDLSARRKAAAFVRNEIADIHEEKDAVVVKSALQKLFSDIAPRYKDRNGGYTRMYKLATPRKGDAAPMVIIELV.

It belongs to the bacterial ribosomal protein bL17 family. As to quaternary structure, part of the 50S ribosomal subunit. Contacts protein L32.

The chain is Large ribosomal subunit protein bL17 from Lactobacillus gasseri (strain ATCC 33323 / DSM 20243 / BCRC 14619 / CIP 102991 / JCM 1131 / KCTC 3163 / NCIMB 11718 / NCTC 13722 / AM63).